A 103-amino-acid polypeptide reads, in one-letter code: Large ribosomal subunit protein bL21 (103 aa).

It belongs to the bacterial ribosomal protein bL21 family. As to quaternary structure, part of the 50S ribosomal subunit. Contacts protein L20.

In terms of biological role, this protein binds to 23S rRNA in the presence of protein L20. The polypeptide is Large ribosomal subunit protein bL21 (Clostridioides difficile (strain 630) (Peptoclostridium difficile)).